A 330-amino-acid chain; its full sequence is Putative protein N-methyltransferase FAM86B1 (330 aa).

Residues Trp139, 165–167 (GSG), Trp228, and Ala247 contribute to the S-adenosyl-L-methionine site.

The protein belongs to the class I-like SAM-binding methyltransferase superfamily. EEF2KMT family.

This chain is Putative protein N-methyltransferase FAM86B1, found in Homo sapiens (Human).